The sequence spans 492 residues: AAA-ATPase At3g28520 (492 aa).

A helical transmembrane segment spans residues 7–25 (IWGFTSTTMASIMFLWPMY). An ATP-binding site is contributed by 249-256 (GPPGTGKS). Disordered regions lie at residues 313-334 (KKKK…LKRV) and 462-492 (KIEK…MVTK). Basic and acidic residues-rich tracts occupy residues 323–332 (EEKKEAENLK) and 462–484 (KIEK…EKQN).

It belongs to the AAA ATPase family. BCS1 subfamily. The cofactor is Mg(2+).

The protein localises to the membrane. It catalyses the reaction ATP + H2O = ADP + phosphate + H(+). The polypeptide is AAA-ATPase At3g28520 (Arabidopsis thaliana (Mouse-ear cress)).